We begin with the raw amino-acid sequence, 110 residues long: Ribonuclease P protein component 1 (110 aa).

This sequence belongs to the eukaryotic/archaeal RNase P protein component 1 family. Consists of a catalytic RNA component and at least 4-5 protein subunits.

The protein localises to the cytoplasm. It carries out the reaction Endonucleolytic cleavage of RNA, removing 5'-extranucleotides from tRNA precursor.. Its function is as follows. Part of ribonuclease P, a protein complex that generates mature tRNA molecules by cleaving their 5'-ends. The protein is Ribonuclease P protein component 1 of Aeropyrum pernix (strain ATCC 700893 / DSM 11879 / JCM 9820 / NBRC 100138 / K1).